We begin with the raw amino-acid sequence, 197 residues long: Large ribosomal subunit protein uL11 (197 aa).

This sequence belongs to the universal ribosomal protein uL11 family. Part of the ribosomal stalk of the 50S ribosomal subunit. Interacts with L10 and the large rRNA to form the base of the stalk. L10 forms an elongated spine to which L12 dimers bind in a sequential fashion forming a multimeric L10(L12)X complex. One or more lysine residues are methylated.

Its function is as follows. Forms part of the ribosomal stalk which helps the ribosome interact with GTP-bound translation factors. The chain is Large ribosomal subunit protein uL11 from Mycoplasmopsis pulmonis (strain UAB CTIP) (Mycoplasma pulmonis).